The sequence spans 341 residues: Small ribosomal subunit biogenesis GTPase RsgA (341 aa).

In terms of domain architecture, CP-type G spans 112–268 (RQQLIAANLD…LIDTPGMREL (157 aa)). GTP-binding positions include 157 to 160 (TKVD) and 210 to 218 (GSSGAGKST). Cysteine 290, cysteine 295, histidine 297, and cysteine 303 together coordinate Zn(2+).

It belongs to the TRAFAC class YlqF/YawG GTPase family. RsgA subfamily. In terms of assembly, monomer. Associates with 30S ribosomal subunit, binds 16S rRNA. Zn(2+) serves as cofactor.

The protein localises to the cytoplasm. One of several proteins that assist in the late maturation steps of the functional core of the 30S ribosomal subunit. Helps release RbfA from mature subunits. May play a role in the assembly of ribosomal proteins into the subunit. Circularly permuted GTPase that catalyzes slow GTP hydrolysis, GTPase activity is stimulated by the 30S ribosomal subunit. The protein is Small ribosomal subunit biogenesis GTPase RsgA of Xylella fastidiosa (strain 9a5c).